Here is a 339-residue protein sequence, read N- to C-terminus: 4-dimethylallyltryptophan N-methyltransferase easF (339 aa).

Belongs to the methyltransferase superfamily. As to quaternary structure, homodimer.

It catalyses the reaction 4-(3-methylbut-2-enyl)-L-tryptophan + S-adenosyl-L-methionine = 4-(3-methylbut-2-enyl)-L-abrine + S-adenosyl-L-homocysteine + H(+). Its pathway is alkaloid biosynthesis; ergot alkaloid biosynthesis. 4-dimethylallyltryptophan N-methyltransferase; part of the gene cluster that mediates the biosynthesis of fumiclavanine C, a fungal ergot alkaloid. DmaW catalyzes the first step of ergot alkaloid biosynthesis by condensing dimethylallyl diphosphate (DMAP) and tryptophan to form 4-dimethylallyl-L-tryptophan. The second step is catalyzed by the methyltransferase easF that methylates 4-dimethylallyl-L-tryptophan in the presence of S-adenosyl-L-methionine, resulting in the formation of 4-dimethylallyl-L-abrine. The catalase easC and the FAD-dependent oxidoreductase easE then transform 4-dimethylallyl-L-abrine to chanoclavine-I which is further oxidized by EasD in the presence of NAD(+), resulting in the formation of chanoclavine-I aldehyde. EasA reduces chanoclavine-I aldehyde to dihydrochanoclavine-I aldehyde that spontaneously dehydrates to form 6,8-dimethyl-6,7-didehydroergoline. EasG then catalyzes the reduction of 6,8-dimethyl-6,7-didehydroergoline to form festuclavine. Hydrolysis of festuclavine by easM then leads to the formation of fumigaclavine B which is in turn acetylated by easN to fumigaclavine A. Finally, easL catalyzes the conversion of fumigaclavine A into fumigaclavine C by attaching a dimethylallyl moiety to C-2 of the indole nucleus. The sequence is that of 4-dimethylallyltryptophan N-methyltransferase easF from Aspergillus fumigatus (strain ATCC MYA-4609 / CBS 101355 / FGSC A1100 / Af293) (Neosartorya fumigata).